The primary structure comprises 415 residues: Squalene synthase 1 (415 aa).

A run of 2 helical transmembrane segments spans residues 281–301 and 391–411; these read AIFRFCAIPQIMAIGTLALCF and LIAIIFIILAILYAYLSSNLL.

Belongs to the phytoene/squalene synthase family. It depends on Mg(2+) as a cofactor. Requires Mn(2+) as cofactor. In terms of tissue distribution, mostly expressed in the shoot apex (buds) and roots, and, to a lower extent, in stems, leaves, flowers and seeds.

It localises to the endoplasmic reticulum membrane. The catalysed reaction is 2 (2E,6E)-farnesyl diphosphate + NADH + H(+) = squalene + 2 diphosphate + NAD(+). It carries out the reaction 2 (2E,6E)-farnesyl diphosphate + NADPH + H(+) = squalene + 2 diphosphate + NADP(+). The protein operates within terpene metabolism; lanosterol biosynthesis; lanosterol from farnesyl diphosphate: step 1/3. Functionally, component of the triterpene saponins (e.g. ginsenosides or panaxosides) and phytosterols biosynthetic pathways. Catalyzes the biosynthesis of squalene. The sequence is that of Squalene synthase 1 from Panax ginseng (Korean ginseng).